We begin with the raw amino-acid sequence, 560 residues long: Thermosome subunit 1 (560 aa).

The tract at residues 525–550 (LSGGQTGSDDDDGGAPGGMGGGMGGM) is disordered. Residues 538–550 (GAPGGMGGGMGGM) show a composition bias toward gly residues.

It belongs to the TCP-1 chaperonin family. The thermosome or CCT complex is a oligomeric complex of two octameric double-ring structures; the complex is probably a heterooligomer of CCT1, CCT2 and CCT3 with yet unknown stoichiometry.

Its function is as follows. Molecular chaperone that assists in the folding or refolding of nascent or denatured proteins along with ATP hydrolysis. ATPase activity is highest in thermosome assemblies containing CCT1:CCT2, followed by assemblies containing CCT1:CCT2:CCT3. Required for thermosome ATPase activity. Not required for growth. The sequence is that of Thermosome subunit 1 (cct1) from Haloferax volcanii (strain ATCC 29605 / DSM 3757 / JCM 8879 / NBRC 14742 / NCIMB 2012 / VKM B-1768 / DS2) (Halobacterium volcanii).